The following is a 586-amino-acid chain: Asparagine synthetase [glutamine-hydrolyzing] (586 aa).

C2 (for GATase activity) is an active-site residue. The 184-residue stretch at 2 to 185 folds into the Glutamine amidotransferase type-2 domain; that stretch reads CGILAVLGCS…PGHLYSSKSG (184 aa). L-glutamine-binding positions include 50-54, 75-77, and D98; these read RLAII and NGE. The Asparagine synthetase domain occupies 194–517; the sequence is PPWFNESVPS…PQNSARLTVP (324 aa). Residues L232, V268, and 342-343 each bind ATP; that span reads SG.

Belongs to the asparagine synthetase family.

It carries out the reaction L-aspartate + L-glutamine + ATP + H2O = L-asparagine + L-glutamate + AMP + diphosphate + H(+). It participates in amino-acid biosynthesis; L-asparagine biosynthesis; L-asparagine from L-aspartate (L-Gln route): step 1/1. This is Asparagine synthetase [glutamine-hydrolyzing] from Brassica oleracea (Wild cabbage).